The sequence spans 293 residues: ATP synthase gamma chain (293 aa).

Belongs to the ATPase gamma chain family. F-type ATPases have 2 components, CF(1) - the catalytic core - and CF(0) - the membrane proton channel. CF(1) has five subunits: alpha(3), beta(3), gamma(1), delta(1), epsilon(1). CF(0) has three main subunits: a, b and c.

The protein localises to the cell membrane. Its function is as follows. Produces ATP from ADP in the presence of a proton gradient across the membrane. The gamma chain is believed to be important in regulating ATPase activity and the flow of protons through the CF(0) complex. The polypeptide is ATP synthase gamma chain (Methylacidiphilum infernorum (isolate V4) (Methylokorus infernorum (strain V4))).